We begin with the raw amino-acid sequence, 127 residues long: Large ribosomal subunit protein bL20 (127 aa).

This sequence belongs to the bacterial ribosomal protein bL20 family.

Binds directly to 23S ribosomal RNA and is necessary for the in vitro assembly process of the 50S ribosomal subunit. It is not involved in the protein synthesizing functions of that subunit. This is Large ribosomal subunit protein bL20 from Renibacterium salmoninarum (strain ATCC 33209 / DSM 20767 / JCM 11484 / NBRC 15589 / NCIMB 2235).